Reading from the N-terminus, the 399-residue chain is Long-chain primary alcohol dehydrogenase AdhA (399 aa).

Belongs to the iron-containing alcohol dehydrogenase family. Homotetramer. The cofactor is Zn(2+).

The catalysed reaction is a primary alcohol + NADP(+) = an aldehyde + NADPH + H(+). Its function is as follows. Alcohol dehydrogenase active against primary long-chain alcohols. Pentan-1-ol is the optimum substrate in vitro, but also shows efficient dehydrogenase activity on propanol, hexanol, and ethanol. The polypeptide is Long-chain primary alcohol dehydrogenase AdhA (adhA) (Thermoanaerobacter ethanolicus (Clostridium thermohydrosulfuricum)).